The chain runs to 356 residues: GTPase Obg (356 aa).

Residues 1–159 (MKFIDRVKIH…RWLRLELKLL (159 aa)) enclose the Obg domain. Residues 160–331 (ADVGLLGMPN…LVAEVARELE (172 aa)) form the OBG-type G domain. GTP is bound by residues 166–173 (GMPNAGKS), 191–195 (FTTLV), 213–216 (DIPG), 283–286 (SKID), and 312–314 (SAV). The Mg(2+) site is built by serine 173 and threonine 193.

It belongs to the TRAFAC class OBG-HflX-like GTPase superfamily. OBG GTPase family. In terms of assembly, monomer. Requires Mg(2+) as cofactor.

The protein localises to the cytoplasm. Its function is as follows. An essential GTPase which binds GTP, GDP and possibly (p)ppGpp with moderate affinity, with high nucleotide exchange rates and a fairly low GTP hydrolysis rate. Plays a role in control of the cell cycle, stress response, ribosome biogenesis and in those bacteria that undergo differentiation, in morphogenesis control. In Syntrophotalea carbinolica (strain DSM 2380 / NBRC 103641 / GraBd1) (Pelobacter carbinolicus), this protein is GTPase Obg.